The sequence spans 179 residues: Large ribosomal subunit protein uL5 (179 aa).

The protein belongs to the universal ribosomal protein uL5 family. As to quaternary structure, part of the 50S ribosomal subunit; part of the 5S rRNA/L5/L18/L25 subcomplex. Contacts the 5S rRNA and the P site tRNA. Forms a bridge to the 30S subunit in the 70S ribosome.

Functionally, this is one of the proteins that bind and probably mediate the attachment of the 5S RNA into the large ribosomal subunit, where it forms part of the central protuberance. In the 70S ribosome it contacts protein S13 of the 30S subunit (bridge B1b), connecting the 2 subunits; this bridge is implicated in subunit movement. Contacts the P site tRNA; the 5S rRNA and some of its associated proteins might help stabilize positioning of ribosome-bound tRNAs. The sequence is that of Large ribosomal subunit protein uL5 from Shewanella piezotolerans (strain WP3 / JCM 13877).